We begin with the raw amino-acid sequence, 405 residues long: Nuclear hormone receptor family member nhr-199 (405 aa).

The segment at residues 20-111 (IPYCLICSEV…MGMQRSSVQQ (92 aa)) is a DNA-binding region (nuclear receptor). 2 NR C4-type zinc fingers span residues 23 to 44 (CLICSEVADGNHFGVAAACRAC) and 60 to 94 (CGRNGQCFFLSCKFLLVGFQISPLSSDARSMCKAC). One can recognise an NR LBD domain in the interval 126–376 (RGKPVLNKLR…PFSRIHGNQK (251 aa)).

This sequence belongs to the nuclear hormone receptor family.

The protein localises to the nucleus. Functionally, orphan nuclear receptor. The polypeptide is Nuclear hormone receptor family member nhr-199 (nhr-199) (Caenorhabditis elegans).